The primary structure comprises 381 residues: Layilin (381 aa).

A signal peptide spans 1-24 (MQPGAALQAMLLAVLLAKPRDSKG). Residues 25–235 (RLLSASDLDP…ERREAALNLA (211 aa)) are Extracellular-facing. The 141-residue stretch at 45–185 (TRRPCYKVIY…CNMKNNFICK (141 aa)) folds into the C-type lectin domain. 2 disulfide bridges follow: Cys71–Cys184 and Cys150–Cys176. The N-linked (GlcNAc...) asparagine glycan is linked to Asn117. Residues 236–256 (YILIPSIPLFLLLVVTSAVCW) traverse the membrane as a helical segment. The Cytoplasmic portion of the chain corresponds to 257 to 381 (VWICRRKREQ…SGWVENEIYY (125 aa)). A phosphoserine mark is found at Ser286 and Ser299. The segment at 330 to 374 (DYENIAVNPSESGFVTLASMESGFVTNDIYEFSPDRMGRSKESGW) is interaction with NF2. Residues 337 to 381 (NPSESGFVTLASMESGFVTNDIYEFSPDRMGRSKESGWVENEIYY) are interaction with TLN1. Tandem repeats lie at residues 340 to 344 (ESGFV), 350 to 354 (ESGFV), 356 to 359 (NDIY), 371 to 375 (ESGWV), and 377 to 380 (NEIY). A 3 X 5 AA repeats of E-S-G-X-V region spans residues 340–375 (ESGFVTLASMESGFVTNDIYEFSPDRMGRSKESGWV). Positions 356-380 (NDIYEFSPDRMGRSKESGWVENEIY) are 2 X 4 AA repeats of N-X-I-Y.

Interacts with TLN1. Interacts with NF2 and RDX.

It is found in the membrane. In terms of biological role, receptor for hyaluronate. This is Layilin (Layn) from Mus musculus (Mouse).